The following is a 1198-amino-acid chain: Chromosome partition protein Smc (1198 aa).

Residue 40–47 coordinates ATP; the sequence is PNGSGKSN. 2 coiled-coil regions span residues 175 to 211 and 322 to 524; these read ITKYRMRKREALKRLDETEHNLERIRDILAEIEGQLG and LGEQ…LAKK. Residues 534 to 647 form the SMC hinge domain; it reads CGTLADLLQV…VTDMEAATRV (114 aa). Positions 687–1042 form a coiled coil; it reads SREIQELRQE…AELDKTMSER (356 aa). The disordered stretch occupies residues 785–818; the sequence is AEEQSKLTDSIQEAQEALARQEEKNRQASREMEQ. Residues 803 to 818 show a composition bias toward basic and acidic residues; sequence ARQEEKNRQASREMEQ.

It belongs to the SMC family. Homodimer.

It localises to the cytoplasm. Required for chromosome condensation and partitioning. The sequence is that of Chromosome partition protein Smc from Desulfitobacterium hafniense (strain Y51).